Reading from the N-terminus, the 52-residue chain is UPF0181 protein HD_1137 (52 aa).

It belongs to the UPF0181 family.

The chain is UPF0181 protein HD_1137 from Haemophilus ducreyi (strain 35000HP / ATCC 700724).